The primary structure comprises 193 residues: Ion-translocating oxidoreductase complex subunit A (193 aa).

Helical transmembrane passes span 5-25 (LMLF…FLGL), 39-59 (LGMG…AWLI), 62-82 (FILL…FIIA), 102-122 (LLGI…VALL), 134-154 (ALYG…FAAI), and 171-191 (SIAL…TGLV).

This sequence belongs to the NqrDE/RnfAE family. The complex is composed of six subunits: RnfA, RnfB, RnfC, RnfD, RnfE and RnfG.

The protein localises to the cell inner membrane. Part of a membrane-bound complex that couples electron transfer with translocation of ions across the membrane. This Sodalis glossinidius (strain morsitans) protein is Ion-translocating oxidoreductase complex subunit A.